A 173-amino-acid chain; its full sequence is Calcium-binding protein 5 (173 aa).

EF-hand domains follow at residues 28–63, 82–99, 105–140, and 142–173; these read DEIEELREAFLEFDKDRDGFISCKDLGNLMRTMGYM, GRVDFDDFVELMTPKLLA, IGVQEMRDAFKEFDTNGDGEITLVELQQAMQRLLGE, and LTPREISEVVREADVNGDGTVDFEEFVKMMSR. Positions 41, 43, 45, and 52 each coordinate Ca(2+). Positions 118, 120, 122, 124, 129, 155, 157, 159, 161, and 166 each coordinate Ca(2+).

As to quaternary structure, interacts with CACNA1C (via C-terminal CDB motif) in a calcium-dependent manner. Interacts with STXBP1. Interacts with MYO6. Retina.

It is found in the cytoplasm. Its function is as follows. Inhibits calcium-dependent inactivation of L-type calcium channel and shifts voltage dependence of activation to more depolarized membrane potentials. Involved in the transmission of light signals. May positively regulate neurotransmitter vesicle endocytosis and exocytosis in a salt-dependent manner. May play a role in the extension and network organization of neurites. The chain is Calcium-binding protein 5 (CABP5) from Homo sapiens (Human).